The chain runs to 304 residues: Dihydroorotate dehydrogenase B (NAD(+)), catalytic subunit (304 aa).

FMN contacts are provided by residues S21 and 45–46 (KA). Substrate-binding positions include K45 and 69–73 (NAIGL). Residues N99 and N127 each contribute to the FMN site. Position 127 (N127) interacts with substrate. C130 functions as the Nucleophile in the catalytic mechanism. 2 residues coordinate FMN: K165 and I191. 192–193 (NT) lines the substrate pocket. Residues G217, 243-244 (GG), and 265-266 (GT) each bind FMN.

This sequence belongs to the dihydroorotate dehydrogenase family. Type 1 subfamily. Heterotetramer of 2 PyrK and 2 PyrD type B subunits. FMN is required as a cofactor.

The protein resides in the cytoplasm. It carries out the reaction (S)-dihydroorotate + NAD(+) = orotate + NADH + H(+). Its pathway is pyrimidine metabolism; UMP biosynthesis via de novo pathway; orotate from (S)-dihydroorotate (NAD(+) route): step 1/1. Catalyzes the conversion of dihydroorotate to orotate with NAD(+) as electron acceptor. The protein is Dihydroorotate dehydrogenase B (NAD(+)), catalytic subunit (pyrD) of Shouchella clausii (strain KSM-K16) (Alkalihalobacillus clausii).